The chain runs to 189 residues: GTP cyclohydrolase 1 (189 aa).

The Zn(2+) site is built by Cys-78, His-81, and Cys-150.

Belongs to the GTP cyclohydrolase I family. Homomer.

The catalysed reaction is GTP + H2O = 7,8-dihydroneopterin 3'-triphosphate + formate + H(+). Its pathway is cofactor biosynthesis; 7,8-dihydroneopterin triphosphate biosynthesis; 7,8-dihydroneopterin triphosphate from GTP: step 1/1. The chain is GTP cyclohydrolase 1 from Lysinibacillus sphaericus (strain C3-41).